Consider the following 763-residue polypeptide: ATP-dependent RNA helicase SUPV3L1, mitochondrial (763 aa).

A mitochondrion-targeting transit peptide spans 1–65; the sequence is MSVNRCIYLL…RPLDTSLFIP (65 aa). Residues 39-58 are disordered; the sequence is RRTFDKLSTRHSSSGSSRPL. The 141-residue stretch at 192–332 folds into the Helicase ATP-binding domain; that stretch reads EARAIQRKIV…AVDFITELMF (141 aa). Residue 205-212 participates in ATP binding; that stretch reads GPTNSGKT. The Helicase C-terminal domain occupies 354-519; it reads HAVESLDNLK…PTAEQIEMFA (166 aa). Disordered regions lie at residues 679–721 and 742–763; these read DSQP…KSSL and EWAR…RKKK. A compositionally biased stretch (polar residues) spans 680–697; the sequence is SQPTDTESNSSSTVPESE.

It belongs to the helicase family. The cofactor is Mg(2+). It depends on Mn(2+) as a cofactor.

The protein resides in the nucleus. It localises to the mitochondrion matrix. Its subcellular location is the mitochondrion nucleoid. It catalyses the reaction ATP + H2O = ADP + phosphate + H(+). In terms of biological role, major helicase player in mitochondrial RNA metabolism. Component of the mitochondrial degradosome (mtEXO) complex, that degrades 3' overhang double-stranded RNA with a 3'-to-5' directionality in an ATP-dependent manner. ATPase and ATP-dependent multisubstrate helicase, able to unwind double-stranded (ds) DNA and RNA, and RNA/DNA heteroduplexes in the 5'-to-3' direction. Plays a role in the RNA surveillance system in mitochondria; regulates the stability of mature mRNAs, the removal of aberrantly formed mRNAs and the rapid degradation of non coding processing intermediates. Also implicated in recombination and chromatin maintenance pathways. May protect cells from apoptosis. Associates with mitochondrial DNA. The protein is ATP-dependent RNA helicase SUPV3L1, mitochondrial (supv3l1) of Danio rerio (Zebrafish).